A 74-amino-acid chain; its full sequence is Kappa-stichotoxin-Sgt4a (74 aa).

Residues 1 to 22 form the signal peptide; the sequence is MKFQVIAAVLLIEFCLCVVVTA. Residues 23–39 constitute a propeptide that is removed on maturation; that stretch reads RMELQDVEDVENGFQKR. Residues 42-74 form the ShKT domain; it reads CIDTIPQSRCTAFQCKHSMKYRLSFCRKTCGTC. 3 cysteine pairs are disulfide-bonded: Cys-42-Cys-74, Cys-51-Cys-67, and Cys-56-Cys-71.

It belongs to the sea anemone type 1 potassium channel toxin family. Type 1a subfamily.

It localises to the secreted. The protein localises to the nematocyst. Inhibits voltage-gated potassium channels (Kv) with higher potency for Kv1.1/KCNA1 and Kv1.3/KCNA3. The chain is Kappa-stichotoxin-Sgt4a from Stichodactyla gigantea (Giant carpet anemone).